The chain runs to 274 residues: Eukaryotic translation initiation factor 3 subunit J (274 aa).

Disordered regions lie at residues 1-120 (MSGK…DLKH) and 227-246 (EEKA…TKTS). The segment covering 30–50 (DEEGNESDVLDSWDAAEDSEV) has biased composition (acidic residues). A coiled-coil region spans residues 46–112 (EDSEVEREKA…AERRERLRRE (67 aa)). Basic and acidic residues-rich tracts occupy residues 51–67 (EREK…KAEA) and 79–92 (RIAE…RQLA). The segment covering 93-102 (EDSDAEEETE) has biased composition (acidic residues). Over residues 103 to 120 (AERRERLRREQKESDLKH) the composition is skewed to basic and acidic residues.

This sequence belongs to the eIF-3 subunit J family. As to quaternary structure, component of the eukaryotic translation initiation factor 3 (eIF-3) complex.

It localises to the cytoplasm. Its function is as follows. Component of the eukaryotic translation initiation factor 3 (eIF-3) complex, which is involved in protein synthesis of a specialized repertoire of mRNAs and, together with other initiation factors, stimulates binding of mRNA and methionyl-tRNAi to the 40S ribosome. The eIF-3 complex specifically targets and initiates translation of a subset of mRNAs involved in cell proliferation. The sequence is that of Eukaryotic translation initiation factor 3 subunit J (hcr-1) from Neurospora crassa (strain ATCC 24698 / 74-OR23-1A / CBS 708.71 / DSM 1257 / FGSC 987).